The following is a 142-amino-acid chain: Large ribosomal subunit protein uL13 (142 aa).

It belongs to the universal ribosomal protein uL13 family. In terms of assembly, part of the 50S ribosomal subunit.

Functionally, this protein is one of the early assembly proteins of the 50S ribosomal subunit, although it is not seen to bind rRNA by itself. It is important during the early stages of 50S assembly. This is Large ribosomal subunit protein uL13 from Halorhodospira halophila (strain DSM 244 / SL1) (Ectothiorhodospira halophila (strain DSM 244 / SL1)).